Reading from the N-terminus, the 150-residue chain is Large ribosomal subunit protein bL17 (150 aa).

A disordered region spans residues 126–150 (DRAKRREERLKAQREGRDHEEETDE).

Belongs to the bacterial ribosomal protein bL17 family. As to quaternary structure, part of the 50S ribosomal subunit. Contacts protein L32.

This chain is Large ribosomal subunit protein bL17, found in Solibacter usitatus (strain Ellin6076).